Here is a 150-residue protein sequence, read N- to C-terminus: Macrodomain Ter protein (150 aa).

Belongs to the MatP family. In terms of assembly, homodimer.

It localises to the cytoplasm. Required for spatial organization of the terminus region of the chromosome (Ter macrodomain) during the cell cycle. Prevents early segregation of duplicated Ter macrodomains during cell division. Binds specifically to matS, which is a 13 bp signature motif repeated within the Ter macrodomain. The polypeptide is Macrodomain Ter protein (Citrobacter koseri (strain ATCC BAA-895 / CDC 4225-83 / SGSC4696)).